Here is a 130-residue protein sequence, read N- to C-terminus: Snaclec B8 (130 aa).

3 cysteine pairs are disulfide-bonded: Cys2–Cys13, Cys30–Cys124, and Cys99–Cys116. In terms of domain architecture, C-type lectin spans 9 to 125 (HEGHCYKVFK…CELAYHFICM (117 aa)).

This sequence belongs to the snaclec family. Heterodimer; disulfide-linked. As to expression, expressed by the venom gland.

Its subcellular location is the secreted. In terms of biological role, interferes with one step of hemostasis (modulation of platelet aggregation, or coagulation cascade, for example). The sequence is that of Snaclec B8 from Macrovipera lebetinus (Levantine viper).